The primary structure comprises 277 residues: Large ribosomal subunit protein uL2 (277 aa).

Positions A225–R277 are disordered. Positions P253–I268 are enriched in basic and acidic residues.

This sequence belongs to the universal ribosomal protein uL2 family. As to quaternary structure, part of the 50S ribosomal subunit. Forms a bridge to the 30S subunit in the 70S ribosome.

One of the primary rRNA binding proteins. Required for association of the 30S and 50S subunits to form the 70S ribosome, for tRNA binding and peptide bond formation. It has been suggested to have peptidyltransferase activity; this is somewhat controversial. Makes several contacts with the 16S rRNA in the 70S ribosome. The protein is Large ribosomal subunit protein uL2 of Tropheryma whipplei (strain TW08/27) (Whipple's bacillus).